Reading from the N-terminus, the 466-residue chain is Adenosylhomocysteinase (466 aa).

Positions 57, 132, and 192 each coordinate substrate. Residue 193-195 (TTT) participates in NAD(+) binding. 2 residues coordinate substrate: lysine 222 and aspartate 226. NAD(+) contacts are provided by residues asparagine 227, 256-261 (GYGDVG), glutamate 279, asparagine 314, 335-337 (IGH), and asparagine 380.

It belongs to the adenosylhomocysteinase family. NAD(+) serves as cofactor.

It localises to the cytoplasm. The catalysed reaction is S-adenosyl-L-homocysteine + H2O = L-homocysteine + adenosine. It functions in the pathway amino-acid biosynthesis; L-homocysteine biosynthesis; L-homocysteine from S-adenosyl-L-homocysteine: step 1/1. Its function is as follows. May play a key role in the regulation of the intracellular concentration of adenosylhomocysteine. The sequence is that of Adenosylhomocysteinase from Chromobacterium violaceum (strain ATCC 12472 / DSM 30191 / JCM 1249 / CCUG 213 / NBRC 12614 / NCIMB 9131 / NCTC 9757 / MK).